Consider the following 239-residue polypeptide: Pyridoxine 5'-phosphate synthase (239 aa).

Asn7 serves as a coordination point for 3-amino-2-oxopropyl phosphate. 1-deoxy-D-xylulose 5-phosphate is bound at residue Asp9 to His10. A 3-amino-2-oxopropyl phosphate-binding site is contributed by Arg18. His43 serves as the catalytic Proton acceptor. Arg45 and His50 together coordinate 1-deoxy-D-xylulose 5-phosphate. Glu70 (proton acceptor) is an active-site residue. Thr100 provides a ligand contact to 1-deoxy-D-xylulose 5-phosphate. His191 (proton donor) is an active-site residue. 3-amino-2-oxopropyl phosphate contacts are provided by residues Gly192 and Gly213–His214.

It belongs to the PNP synthase family. Homooctamer; tetramer of dimers.

The protein localises to the cytoplasm. The enzyme catalyses 3-amino-2-oxopropyl phosphate + 1-deoxy-D-xylulose 5-phosphate = pyridoxine 5'-phosphate + phosphate + 2 H2O + H(+). It functions in the pathway cofactor biosynthesis; pyridoxine 5'-phosphate biosynthesis; pyridoxine 5'-phosphate from D-erythrose 4-phosphate: step 5/5. In terms of biological role, catalyzes the complicated ring closure reaction between the two acyclic compounds 1-deoxy-D-xylulose-5-phosphate (DXP) and 3-amino-2-oxopropyl phosphate (1-amino-acetone-3-phosphate or AAP) to form pyridoxine 5'-phosphate (PNP) and inorganic phosphate. This is Pyridoxine 5'-phosphate synthase from Citrifermentans bemidjiense (strain ATCC BAA-1014 / DSM 16622 / JCM 12645 / Bem) (Geobacter bemidjiensis).